A 386-amino-acid chain; its full sequence is Chorismate synthase (386 aa).

The interval 32–60 (LPLSEDDVQRELDRRRPGQSGVSTPRSER) is disordered. A compositionally biased stretch (basic and acidic residues) spans 38 to 47 (DVQRELDRRR). Arginine 46 contributes to the NADP(+) binding site. Residues 123–125 (RAS), glycine 290, 305–309 (KPTPS), and arginine 332 each bind FMN.

Belongs to the chorismate synthase family. Requires FMNH2 as cofactor.

The catalysed reaction is 5-O-(1-carboxyvinyl)-3-phosphoshikimate = chorismate + phosphate. The protein operates within metabolic intermediate biosynthesis; chorismate biosynthesis; chorismate from D-erythrose 4-phosphate and phosphoenolpyruvate: step 7/7. Catalyzes the anti-1,4-elimination of the C-3 phosphate and the C-6 proR hydrogen from 5-enolpyruvylshikimate-3-phosphate (EPSP) to yield chorismate, which is the branch point compound that serves as the starting substrate for the three terminal pathways of aromatic amino acid biosynthesis. This reaction introduces a second double bond into the aromatic ring system. This is Chorismate synthase from Methanopyrus kandleri (strain AV19 / DSM 6324 / JCM 9639 / NBRC 100938).